The primary structure comprises 427 residues: UDP-N-acetylglucosamine 1-carboxyvinyltransferase (427 aa).

22–23 (KN) provides a ligand contact to phosphoenolpyruvate. Arg99 serves as a coordination point for UDP-N-acetyl-alpha-D-glucosamine. Cys123 (proton donor) is an active-site residue. Cys123 is subject to 2-(S-cysteinyl)pyruvic acid O-phosphothioketal. Residues 128–132 (RPIDL), Asp313, and Ile335 each bind UDP-N-acetyl-alpha-D-glucosamine.

This sequence belongs to the EPSP synthase family. MurA subfamily.

Its subcellular location is the cytoplasm. It catalyses the reaction phosphoenolpyruvate + UDP-N-acetyl-alpha-D-glucosamine = UDP-N-acetyl-3-O-(1-carboxyvinyl)-alpha-D-glucosamine + phosphate. The protein operates within cell wall biogenesis; peptidoglycan biosynthesis. Functionally, cell wall formation. Adds enolpyruvyl to UDP-N-acetylglucosamine. This is UDP-N-acetylglucosamine 1-carboxyvinyltransferase from Sphingopyxis alaskensis (strain DSM 13593 / LMG 18877 / RB2256) (Sphingomonas alaskensis).